A 656-amino-acid chain; its full sequence is UvrABC system protein B (656 aa).

The 386-residue stretch at 24 to 409 (QGVRNRTPSQ…QGHIVEQILR (386 aa)) folds into the Helicase ATP-binding domain. ATP is bound at residue 37–44 (GTTGSGKT). A Beta-hairpin motif is present at residues 90 to 113 (YYDYYQPEAYIARNDTYIEKSLLI). The 164-residue stretch at 426 to 589 (QVDDLLEEIR…ITPKPIIKAI (164 aa)) folds into the Helicase C-terminal domain. In terms of domain architecture, UVR spans 616–651 (EKLIKKYENLMLQAANAFRFDEAAQYRDKMKAAKEQ).

Belongs to the UvrB family. Forms a heterotetramer with UvrA during the search for lesions. Interacts with UvrC in an incision complex.

It localises to the cytoplasm. The UvrABC repair system catalyzes the recognition and processing of DNA lesions. A damage recognition complex composed of 2 UvrA and 2 UvrB subunits scans DNA for abnormalities. Upon binding of the UvrA(2)B(2) complex to a putative damaged site, the DNA wraps around one UvrB monomer. DNA wrap is dependent on ATP binding by UvrB and probably causes local melting of the DNA helix, facilitating insertion of UvrB beta-hairpin between the DNA strands. Then UvrB probes one DNA strand for the presence of a lesion. If a lesion is found the UvrA subunits dissociate and the UvrB-DNA preincision complex is formed. This complex is subsequently bound by UvrC and the second UvrB is released. If no lesion is found, the DNA wraps around the other UvrB subunit that will check the other stand for damage. This chain is UvrABC system protein B, found in Chlamydia abortus (strain DSM 27085 / S26/3) (Chlamydophila abortus).